Consider the following 248-residue polypeptide: Tryptophan synthase alpha chain (248 aa).

Active-site proton acceptor residues include Glu36 and Asp47.

Belongs to the TrpA family. As to quaternary structure, tetramer of two alpha and two beta chains.

The enzyme catalyses (1S,2R)-1-C-(indol-3-yl)glycerol 3-phosphate + L-serine = D-glyceraldehyde 3-phosphate + L-tryptophan + H2O. It participates in amino-acid biosynthesis; L-tryptophan biosynthesis; L-tryptophan from chorismate: step 5/5. Its function is as follows. The alpha subunit is responsible for the aldol cleavage of indoleglycerol phosphate to indole and glyceraldehyde 3-phosphate. This Pyrococcus furiosus (strain ATCC 43587 / DSM 3638 / JCM 8422 / Vc1) protein is Tryptophan synthase alpha chain.